Here is a 360-residue protein sequence, read N- to C-terminus: Phenylalanine--tRNA ligase alpha subunit (360 aa).

E260 contributes to the Mg(2+) binding site.

It belongs to the class-II aminoacyl-tRNA synthetase family. Phe-tRNA synthetase alpha subunit type 1 subfamily. As to quaternary structure, tetramer of two alpha and two beta subunits. It depends on Mg(2+) as a cofactor.

Its subcellular location is the cytoplasm. It catalyses the reaction tRNA(Phe) + L-phenylalanine + ATP = L-phenylalanyl-tRNA(Phe) + AMP + diphosphate + H(+). This Beijerinckia indica subsp. indica (strain ATCC 9039 / DSM 1715 / NCIMB 8712) protein is Phenylalanine--tRNA ligase alpha subunit.